Reading from the N-terminus, the 353-residue chain is Heat-inducible transcription repressor HrcA (353 aa).

It belongs to the HrcA family.

In terms of biological role, negative regulator of class I heat shock genes (grpE-dnaK-dnaJ and groELS operons). Prevents heat-shock induction of these operons. This Synechococcus elongatus (strain ATCC 33912 / PCC 7942 / FACHB-805) (Anacystis nidulans R2) protein is Heat-inducible transcription repressor HrcA.